A 190-amino-acid polypeptide reads, in one-letter code: Ion-translocating oxidoreductase complex subunit B (190 aa).

Positions M1–A26 are hydrophobic. The 59-residue stretch at E32–V90 folds into the 4Fe-4S domain. Residues C49, C52, C57, C73, C115, C118, C121, C125, C145, C148, C151, and C155 each contribute to the [4Fe-4S] cluster site. 2 consecutive 4Fe-4S ferredoxin-type domains span residues Q106–R135 and A136–V165.

This sequence belongs to the 4Fe4S bacterial-type ferredoxin family. RnfB subfamily. As to quaternary structure, the complex is composed of six subunits: RnfA, RnfB, RnfC, RnfD, RnfE and RnfG. [4Fe-4S] cluster serves as cofactor.

The protein localises to the cell inner membrane. Its function is as follows. Part of a membrane-bound complex that couples electron transfer with translocation of ions across the membrane. The protein is Ion-translocating oxidoreductase complex subunit B of Serratia proteamaculans (strain 568).